A 358-amino-acid polypeptide reads, in one-letter code: Photosystem II protein D1 2 (358 aa).

Transmembrane regions (helical) follow at residues 28-45, 117-132, and 141-155; these read YVGW…AATI, HFLI…QWEL, and WICV…AAMA. His117 lines the chlorophyll a pocket. Position 125 (Tyr125) interacts with pheophytin a. Asp169 and Glu188 together coordinate [CaMn4O5] cluster. The chain crosses the membrane as a helical span at residues 196–217; sequence FHMLGVAGVFGGSLFSAMHGSL. His197 serves as a coordination point for chlorophyll a. A quinone is bound by residues His214 and 263-264; that span reads SF. Fe cation is bound at residue His214. Position 271 (His271) interacts with Fe cation. A helical transmembrane segment spans residues 273–287; that stretch reads FLGAWPVVGIWFTSM. The [CaMn4O5] cluster site is built by His331, Glu332, Asp341, and Ala343. The propeptide occupies 344–358; that stretch reads AAESTPVALQAPAIG.

This sequence belongs to the reaction center PufL/M/PsbA/D family. In terms of assembly, PSII is composed of 1 copy each of membrane proteins PsbA, PsbB, PsbC, PsbD, PsbE, PsbF, PsbH, PsbI, PsbJ, PsbK, PsbL, PsbM, PsbT, PsbX, PsbY, PsbZ, Psb30/Ycf12, peripheral proteins PsbO, CyanoQ (PsbQ), PsbU, PsbV and a large number of cofactors. It forms dimeric complexes. The cofactor is The D1/D2 heterodimer binds P680, chlorophylls that are the primary electron donor of PSII, and subsequent electron acceptors. It shares a non-heme iron and each subunit binds pheophytin, quinone, additional chlorophylls, carotenoids and lipids. D1 provides most of the ligands for the Mn4-Ca-O5 cluster of the oxygen-evolving complex (OEC). There is also a Cl(-1) ion associated with D1 and D2, which is required for oxygen evolution. The PSII complex binds additional chlorophylls, carotenoids and specific lipids.. Tyr-160 forms a radical intermediate that is referred to as redox-active TyrZ, YZ or Y-Z. In terms of processing, C-terminally processed by CtpA; processing is essential to allow assembly of the oxygen-evolving complex and thus photosynthetic growth.

It is found in the cellular thylakoid membrane. The catalysed reaction is 2 a plastoquinone + 4 hnu + 2 H2O = 2 a plastoquinol + O2. Photosystem II (PSII) is a light-driven water:plastoquinone oxidoreductase that uses light energy to abstract electrons from H(2)O, generating O(2) and a proton gradient subsequently used for ATP formation. It consists of a core antenna complex that captures photons, and an electron transfer chain that converts photonic excitation into a charge separation. The D1/D2 (PsbA/PsbD) reaction center heterodimer binds P680, the primary electron donor of PSII as well as several subsequent electron acceptors. This chain is Photosystem II protein D1 2, found in Synechococcus sp. (strain CC9605).